Reading from the N-terminus, the 206-residue chain is ATP-dependent Clp protease proteolytic subunit (206 aa).

Ser110 (nucleophile) is an active-site residue. The active site involves His135.

It belongs to the peptidase S14 family. As to quaternary structure, fourteen ClpP subunits assemble into 2 heptameric rings which stack back to back to give a disk-like structure with a central cavity, resembling the structure of eukaryotic proteasomes.

The protein localises to the cytoplasm. It catalyses the reaction Hydrolysis of proteins to small peptides in the presence of ATP and magnesium. alpha-casein is the usual test substrate. In the absence of ATP, only oligopeptides shorter than five residues are hydrolyzed (such as succinyl-Leu-Tyr-|-NHMec, and Leu-Tyr-Leu-|-Tyr-Trp, in which cleavage of the -Tyr-|-Leu- and -Tyr-|-Trp bonds also occurs).. Cleaves peptides in various proteins in a process that requires ATP hydrolysis. Has a chymotrypsin-like activity. Plays a major role in the degradation of misfolded proteins. This is ATP-dependent Clp protease proteolytic subunit from Edwardsiella ictaluri (strain 93-146).